The sequence spans 460 residues: Asparagine--tRNA ligase (460 aa).

The protein belongs to the class-II aminoacyl-tRNA synthetase family. As to quaternary structure, homodimer.

Its subcellular location is the cytoplasm. The catalysed reaction is tRNA(Asn) + L-asparagine + ATP = L-asparaginyl-tRNA(Asn) + AMP + diphosphate + H(+). This chain is Asparagine--tRNA ligase, found in Picosynechococcus sp. (strain ATCC 27264 / PCC 7002 / PR-6) (Agmenellum quadruplicatum).